Reading from the N-terminus, the 228-residue chain is Abnormal cell migration protein 18 (228 aa).

A signal peptide spans 1-19 (MTFTLRLLVLCTVYSYVIS). 2 N-linked (GlcNAc...) asparagine glycosylation sites follow: Asn135 and Asn159.

In terms of tissue distribution, expressed in body wall muscle.

It localises to the secreted. It is found in the extracellular space. The protein resides in the extracellular matrix. The protein localises to the basement membrane. Required for the directional control of distal tip cell migration during gonadogenesis, probably by recruiting fibulin fbl-1 to the gonad basement membrane. This is Abnormal cell migration protein 18 from Caenorhabditis elegans.